The chain runs to 841 residues: Beta-adaptin-like protein A (841 aa).

Disordered stretches follow at residues 1 to 25 (MAPP…VSDL) and 650 to 671 (DENK…LESS). Composition is skewed to polar residues over residues 9–25 (RYPS…VSDL) and 654–671 (GVSN…LESS).

It belongs to the adaptor complexes large subunit family. Adaptor protein complexes are heterotetramers composed of two large adaptins (beta-type subunit and alpha-type or delta-type or epsilon-type or gamma-type subunit), a medium adaptin (mu-type subunit) and a small adaptin (sigma-type subunit). Interacts with AHK2.

The protein localises to the golgi apparatus. It is found in the trans-Golgi network. It localises to the cytoplasmic vesicle. The protein resides in the clathrin-coated vesicle membrane. Functionally, subunit of clathrin-associated adaptor protein complex that plays a role in protein sorting in the late-Golgi/trans-Golgi network (TGN) and/or endosomes. The AP complexes mediate both the recruitment of clathrin to membranes and the recognition of sorting signals within the cytosolic tails of transmembrane cargo molecules. The polypeptide is Beta-adaptin-like protein A (BETAA-AD) (Arabidopsis thaliana (Mouse-ear cress)).